The primary structure comprises 285 residues: Bifunctional protein FolD (285 aa).

NADP(+) contacts are provided by residues 165-167 and S190; that span reads GRS.

Belongs to the tetrahydrofolate dehydrogenase/cyclohydrolase family. As to quaternary structure, homodimer.

The catalysed reaction is (6R)-5,10-methylene-5,6,7,8-tetrahydrofolate + NADP(+) = (6R)-5,10-methenyltetrahydrofolate + NADPH. It catalyses the reaction (6R)-5,10-methenyltetrahydrofolate + H2O = (6R)-10-formyltetrahydrofolate + H(+). Its pathway is one-carbon metabolism; tetrahydrofolate interconversion. Functionally, catalyzes the oxidation of 5,10-methylenetetrahydrofolate to 5,10-methenyltetrahydrofolate and then the hydrolysis of 5,10-methenyltetrahydrofolate to 10-formyltetrahydrofolate. This is Bifunctional protein FolD from Staphylococcus carnosus (strain TM300).